The sequence spans 165 residues: NADPH-dependent 7-cyano-7-deazaguanine reductase (165 aa).

Cys56 serves as the catalytic Thioimide intermediate. Asp63 serves as the catalytic Proton donor. Substrate is bound by residues 78–80 and 97–98; these read VES and HE.

The protein belongs to the GTP cyclohydrolase I family. QueF type 1 subfamily.

It is found in the cytoplasm. It catalyses the reaction 7-aminomethyl-7-carbaguanine + 2 NADP(+) = 7-cyano-7-deazaguanine + 2 NADPH + 3 H(+). Its pathway is tRNA modification; tRNA-queuosine biosynthesis. Functionally, catalyzes the NADPH-dependent reduction of 7-cyano-7-deazaguanine (preQ0) to 7-aminomethyl-7-deazaguanine (preQ1). The sequence is that of NADPH-dependent 7-cyano-7-deazaguanine reductase from Bacillus licheniformis (strain ATCC 14580 / DSM 13 / JCM 2505 / CCUG 7422 / NBRC 12200 / NCIMB 9375 / NCTC 10341 / NRRL NRS-1264 / Gibson 46).